We begin with the raw amino-acid sequence, 124 residues long: Small ribosomal subunit protein bS6 (124 aa).

Belongs to the bacterial ribosomal protein bS6 family.

Functionally, binds together with bS18 to 16S ribosomal RNA. The sequence is that of Small ribosomal subunit protein bS6 from Bordetella avium (strain 197N).